A 192-amino-acid polypeptide reads, in one-letter code: Nucleoside triphosphate pyrophosphatase (192 aa).

Aspartate 73 acts as the Proton acceptor in catalysis.

This sequence belongs to the Maf family. Requires a divalent metal cation as cofactor.

The protein localises to the cytoplasm. It carries out the reaction a ribonucleoside 5'-triphosphate + H2O = a ribonucleoside 5'-phosphate + diphosphate + H(+). The catalysed reaction is a 2'-deoxyribonucleoside 5'-triphosphate + H2O = a 2'-deoxyribonucleoside 5'-phosphate + diphosphate + H(+). Its function is as follows. Nucleoside triphosphate pyrophosphatase. May have a dual role in cell division arrest and in preventing the incorporation of modified nucleotides into cellular nucleic acids. The polypeptide is Nucleoside triphosphate pyrophosphatase (Ehrlichia ruminantium (strain Welgevonden)).